The sequence spans 277 residues: Phosphatidylglycerol--prolipoprotein diacylglyceryl transferase (277 aa).

4 helical membrane passes run 15 to 35, 50 to 70, 89 to 109, and 112 to 132; these read IHVRWYGIIIACGILLATFMS, IDLLLWGVPIGFIGARIYYVI, GGIAIYGGLIAGAIVLLVFCY, and FLPPFLVLDIVAPGVMAAQVL. Residue arginine 134 coordinates a 1,2-diacyl-sn-glycero-3-phospho-(1'-sn-glycerol). A run of 3 helical transmembrane segments spans residues 174 to 194, 204 to 224, and 234 to 254; these read KPTFLYESFFNLIGLIIILSL, GEVFMLYLAWYSVVRFFVEGM, and VIRVSQALSLLLLIAVVILFV.

The protein belongs to the Lgt family.

The protein resides in the cell membrane. It catalyses the reaction L-cysteinyl-[prolipoprotein] + a 1,2-diacyl-sn-glycero-3-phospho-(1'-sn-glycerol) = an S-1,2-diacyl-sn-glyceryl-L-cysteinyl-[prolipoprotein] + sn-glycerol 1-phosphate + H(+). Its pathway is protein modification; lipoprotein biosynthesis (diacylglyceryl transfer). Catalyzes the transfer of the diacylglyceryl group from phosphatidylglycerol to the sulfhydryl group of the N-terminal cysteine of a prolipoprotein, the first step in the formation of mature lipoproteins. This is Phosphatidylglycerol--prolipoprotein diacylglyceryl transferase from Lactobacillus delbrueckii subsp. bulgaricus (strain ATCC 11842 / DSM 20081 / BCRC 10696 / JCM 1002 / NBRC 13953 / NCIMB 11778 / NCTC 12712 / WDCM 00102 / Lb 14).